We begin with the raw amino-acid sequence, 274 residues long: Large ribosomal subunit protein uL2cz/uL2cy (274 aa).

Disordered regions lie at residues 1–22 (MAIH…DSQV) and 225–274 (PVDH…RRSK).

It belongs to the universal ribosomal protein uL2 family. Part of the 50S ribosomal subunit.

It localises to the plastid. The protein localises to the chloroplast. This chain is Large ribosomal subunit protein uL2cz/uL2cy (rpl2-A), found in Arabis hirsuta (Hairy rock-cress).